The primary structure comprises 347 residues: sn-1 oleoyl-lipid 12-desaturase (347 aa).

2 helical membrane-spanning segments follow: residues Ala41–Pro63 and Leu67–Gly85. The short motif at His86–His90 is the Histidine box-1 element. The chain crosses the membrane as a helical span at residues Trp98 to Trp118. Positions His122–His126 match the Histidine box-2 motif. 3 helical membrane passes run Leu164 to Glu184, Leu196 to Trp216, and Val218 to Leu238. Residues His286–Thr290 carry the Histidine box-3 motif.

The protein belongs to the fatty acid desaturase type 2 family. It depends on Fe(2+) as a cofactor.

The protein resides in the membrane. The catalysed reaction is a 1-[(9Z)-octadecenoyl]-2-acyl-glycerolipid + 2 reduced [2Fe-2S]-[ferredoxin] + O2 + 2 H(+) = a 1-[(9Z,12Z)-octadecdienoyl]-2-acyl-glycerolipid + 2 oxidized [2Fe-2S]-[ferredoxin] + 2 H2O. The protein operates within lipid metabolism; polyunsaturated fatty acid biosynthesis. In terms of biological role, desaturase involved in fatty acid biosynthesis. Introduces a double bond at carbon 12 of oleoyl groups (18:1) attached to the sn-1 position of the glycerol moiety of membrane glycerolipids. Can also efficiently catalyze the desaturation of palmitoleic acid (16:1) in vitro. The chain is sn-1 oleoyl-lipid 12-desaturase from Picosynechococcus sp. (strain ATCC 27264 / PCC 7002 / PR-6) (Agmenellum quadruplicatum).